Consider the following 295-residue polypeptide: MAETPSFQSLILRLQQFWAAQGCVLLQPYDMEVGAGTFHPATTLRALGPEPWKAAYVQPSRRPTDGRYGENPNRLQHYYQFQVILKPSPADPQALYLDSLRALGIDPLKHDIRFVEDDWESPTLGAWGLGWEVWCDGMEVTQFTYFQQVGGFDCDPVPVEMTYGLERLAMYIQGVENVYDLDYNGAGVRYGDIFLQGEKEFSAHNFEYANTEALFRHFKDAEEECMALLAKGVPLPAYDQCIKASHRFNLLDARGVISVTERAAYIGRVRALAKGCCEGWLRARGHLPPLTGTEG.

The protein belongs to the class-II aminoacyl-tRNA synthetase family. In terms of assembly, tetramer of two alpha and two beta subunits.

It is found in the cytoplasm. It carries out the reaction tRNA(Gly) + glycine + ATP = glycyl-tRNA(Gly) + AMP + diphosphate. This Rhodospirillum rubrum (strain ATCC 11170 / ATH 1.1.1 / DSM 467 / LMG 4362 / NCIMB 8255 / S1) protein is Glycine--tRNA ligase alpha subunit.